Consider the following 488-residue polypeptide: Probable (S)-N-methylcoclaurine 3'-hydroxylase isozyme 2 (488 aa).

The chain crosses the membrane as a helical span at residues 2–21 (EVLSIAIVSFSFLLFLFFIL). Cysteine 427 lines the heme pocket.

Belongs to the cytochrome P450 family. It depends on heme as a cofactor. As to expression, expressed at low levels in roots.

The protein localises to the endoplasmic reticulum membrane. Its subcellular location is the microsome membrane. The catalysed reaction is (S)-N-methylcoclaurine + reduced [NADPH--hemoprotein reductase] + O2 = (S)-3'-hydroxy-N-methylcoclaurine + oxidized [NADPH--hemoprotein reductase] + H2O + H(+). The protein operates within alkaloid biosynthesis; (S)-reticuline biosynthesis; (S)-reticuline from (S)-norcoclaurine: step 3/4. In terms of biological role, 3'-hydroxylation of (S)-N-methylcoclaurine. In Coptis japonica (Japanese goldthread), this protein is Probable (S)-N-methylcoclaurine 3'-hydroxylase isozyme 2 (CYP80B2).